A 561-amino-acid polypeptide reads, in one-letter code: Oligo-1,6-glucosidase 1 (561 aa).

5 residues coordinate Ca(2+): Asp-20, Asn-22, Asp-24, Phe-26, and Asp-28. Asp-199 acts as the Nucleophile in catalysis. Glu-255 acts as the Proton donor in catalysis.

Belongs to the glycosyl hydrolase 13 family.

The protein resides in the cytoplasm. The catalysed reaction is Hydrolysis of (1-&gt;6)-alpha-D-glucosidic linkages in some oligosaccharides produced from starch and glycogen by alpha-amylase, and in isomaltose.. In terms of biological role, hydrolyzes various disaccharides such as sucrose, maltose, and isomaltose with different efficiencies. Also hydrolyzes longer maltodextrins from maltotriose up to maltohexaose, but not maltoheptaose, palatinose, isomaltotriose, or isomaltotetraose. The sequence is that of Oligo-1,6-glucosidase 1 (malL) from Bacillus subtilis (strain 168).